A 239-amino-acid polypeptide reads, in one-letter code: Phosphoribosylaminoimidazole-succinocarboxamide synthase (239 aa).

Belongs to the SAICAR synthetase family.

The enzyme catalyses 5-amino-1-(5-phospho-D-ribosyl)imidazole-4-carboxylate + L-aspartate + ATP = (2S)-2-[5-amino-1-(5-phospho-beta-D-ribosyl)imidazole-4-carboxamido]succinate + ADP + phosphate + 2 H(+). It functions in the pathway purine metabolism; IMP biosynthesis via de novo pathway; 5-amino-1-(5-phospho-D-ribosyl)imidazole-4-carboxamide from 5-amino-1-(5-phospho-D-ribosyl)imidazole-4-carboxylate: step 1/2. The sequence is that of Phosphoribosylaminoimidazole-succinocarboxamide synthase from Campylobacter hominis (strain ATCC BAA-381 / DSM 21671 / CCUG 45161 / LMG 19568 / NCTC 13146 / CH001A).